The sequence spans 2223 residues: MKDSGSEMIKRDWVMKQKRRKLPSILDILDQKVDSSMAFDSPEYTSSSKPSKQRLKTDSTPERNSSKRKGNDGNYFECVICDLGGDLLCCDSCPRTYHTACLNPPLKRIPNGKWICPKCSPNSEALKPVNRLDAIAKRARTKTKKRNSKAGPKCERASQIYCSSIISGEQSSEKGKSISAEESKSTGKEVYSSPMDGCSTAELGHASADDRPDSSSHGEDDLGKPVIPTADLPSDAGLTLLSCEDLSESKLSDTEKTHEAPVEKLEHASSEIVENKTVAEMETGKGKRKKRKRELNDGESLERCKTDKKRAKKSLSKVGSSSQTTKSPESSKKKKKKNRVTLKSLSKPQSKTETPEKVKKLPKEERRAVRATNKSSSCLEDTNSLPVGNLQVHRVLGCRIQGLTKTSLCSALSDDLCSDNLQATDQRDSLVQDTNAELVVAEDRIDSSSETGKSSRDSRLRDKDMDDSALGTEGMVEVKEEMLSEDISNATLSRHVDDEDMKVSETHVSVERELLEEAHQETGEKSTVADEEIEEPVAAKTSDLIGETVSYEFLVKWVDKSNIHNTWISEAELKGLAKRKLENYKAKYGTAVINICEDKWKQPQRIVALRVSKEGNQEAYVKWTGLAYDECTWESLEEPILKHSSHLIDLFHQYEQKTLERNSKGNPTRERGEVVTLTEQPQELRGGALFAHQLEALNWLRRCWHKSKNVILADEMGLGKTVSASAFLSSLYFEFGVARPCLVLVPLSTMPNWLSEFSLWAPLLNVVEYHGSAKGRAIIRDYEWHAKNSTGTTKKPTSYKFNVLLTTYEMVLADSSHLRGVPWEVLVVDEGHRLKNSESKLFSLLNTFSFQHRVLLTGTPLQNNIGEMYNLLNFLQPSSFPSLSSFEERFHDLTSAEKVEELKKLVAPHMLRRLKKDAMQNIPPKTERMVPVELTSIQAEYYRAMLTKNYQILRNIGKGVAQQSMLNIVMQLRKVCNHPYLIPGTEPESGSLEFLHDMRIKASAKLTLLHSMLKVLHKEGHRVLIFSQMTKLLDILEDYLNIEFGPKTFERVDGSVAVADRQAAIARFNQDKNRFVFLLSTRACGLGINLATADTVIIYDSDFNPHADIQAMNRAHRIGQSKRLLVYRLVVRASVEERILQLAKKKLMLDQLFVNKSGSQKEFEDILRWGTEELFNDSAGENKKDTAESNGNLDVIMDLESKSRKKGGGLGDVYQDKCTEGNGKIVWDDIAIMKLLDRSNLQSASTDAADTELDNDMLGSVKPVEWNEETAEEQVGAESPALVTDDTGEPSSERKDDDVVNFTEENEWDRLLRMRWEKYQSEEEAALGRGKRLRKAVSYREAYAPHTSGPVNESGGEDEKEPEPELKKEYTPAGRALKEKFTKLRERQKNLIARRNSVEESLPSGNVDQVTEVANQDEESPTSMDLDDSKASQQCDAQKRKASSSDPKPDLLSQHHHGAECLPSLPPNNLPVLGLCAPNFTQSESSRRNYSRPGSRQNRPITGPHFPFNLPQTSNLVEREANDQEPPMGKLKPQNIKEEPFQQPLSNMDGWLPHRQFPPSGDFERPRSSGAAFADFQEKFPLLNLPFDDKLLPRFPFQPRTMGTSHQDIMANLSMRKRFEGTGHSMQDLFGGTPMPFLPNMKIPPMDPPVFNQQEKDLPPLGLDQFPSALSSIPENHRKVLENIMLRTGSGIGHVQKKKTRVDAWSEDELDSLWIGIRRHGYGNWETILRDPRLKFSKFKTPEYLAARWEEEQRKFLDSLSSLPSKSSRTDKSTKSSLFPGLPQGIMNRALHGKYATPPRFQSHLTDIKLGFGDLASPLPLFEPSDHLGFRSEHFPPMANLCTDNLPGEPSAGPSERAGTSTNIPNEKPFPLNSLGMGNLGSLGLDSLSSLNTLRAEEKRDAIKRGKLPLFLDMPLPQMLDSSNNVFLGRSANPSFLHPNRGLNPSNPMGRDIMGISSSENKLPHWLRNVVTVPTVKSPEPPTLPPTVSAIAQSVRVLYGEDSTTIPPFVIPEPPPPAPRDPRHSLRKKRKRKLHSSSQKTTDIGSSSHNAVESSSQGNPQTSATPPLPPPSLAGETSGSSQPKLPPHNLNSTEPLSSEAIIIPPPEEDSVIAAAPSEAPGPSLEGITGTTKSISLESQSSEPETINQDGDLDPETDEKVESERTPLHSDEKQEEQESENALNKQCEPIEAESQNTNAEEEAEAQEEDEESMKMVTGNSLSDD.

A disordered region spans residues 39–69 (FDSPEYTSSSKPSKQRLKTDSTPERNSSKRK). The segment covering 55-69 (LKTDSTPERNSSKRK) has biased composition (basic and acidic residues). Residues 75–122 (YFECVICDLGGDLLCCDSCPRTYHTACLNPPLKRIPNGKWICPKCSPN) form a PHD-type zinc finger. 4 stretches are compositionally biased toward basic and acidic residues: residues 173–187 (EKGKSISAEESKSTG), 207–223 (SADDRPDSSSHGEDDLG), 248–285 (ESKLSDTEKTHEAPVEKLEHASSEIVENKTVAEMETGK), and 294–305 (ELNDGESLERCK). Disordered regions lie at residues 173 to 235 (EKGK…LPSD), 248 to 381 (ESKL…CLED), and 441 to 474 (AEDRIDSSSETGKSSRDSRLRDKDMDDSALGTEG). Residues 306 to 315 (TDKKRAKKSL) show a composition bias toward basic residues. Residues 353 to 368 (ETPEKVKKLPKEERRA) show a composition bias toward basic and acidic residues. The span at 372 to 381 (TNKSSSCLED) shows a compositional bias: polar residues. The segment covering 441 to 466 (AEDRIDSSSETGKSSRDSRLRDKDMD) has biased composition (basic and acidic residues). Chromo domains lie at 531–587 (EEIE…YKAK) and 601–663 (KQPQ…ERNS). One can recognise a Helicase ATP-binding domain in the interval 701–878 (RRCWHKSKNV…YNLLNFLQPS (178 aa)). 714-721 (DEMGLGKT) lines the ATP pocket. The DEAH box motif lies at 829–832 (DEGH). A Nuclear localization signal motif is present at residues 902-909 (LKKLVAPH). Residues 1008–1167 (LLHSMLKVLH…GSQKEFEDIL (160 aa)) form the Helicase C-terminal domain. Disordered regions lie at residues 1268–1300 (EETAEEQVGAESPALVTDDTGEPSSERKDDDVV), 1341–1380 (EAYAPHTSGPVNESGGEDEKEPEPELKKEYTPAGRALKEK), 1394–1463 (RRNS…ECLP), 1483–1511 (SESSRRNYSRPGSRQNRPITGPHFPFNLP), 1760–1779 (LSSLPSKSSRTDKSTKSSLF), and 2006–2223 (IPPF…LSDD). Residues 1363–1380 (EPELKKEYTPAGRALKEK) are compositionally biased toward basic and acidic residues. Residues 1375 to 1402 (RALKEKFTKLRERQKNLIARRNSVEESL) adopt a coiled-coil conformation. Residues 1403–1414 (PSGNVDQVTEVA) show a composition bias toward polar residues. Positions 2009–2019 (FVIPEPPPPAP) are enriched in pro residues. Residues 2025 to 2035 (SLRKKRKRKLH) show a composition bias toward basic residues. 3 stretches are compositionally biased toward polar residues: residues 2039–2061 (QKTTDIGSSSHNAVESSSQGNPQ), 2075–2096 (GETSGSSQPKLPPHNLNSTEPL), and 2128–2148 (TGTTKSISLESQSSEPETINQ). Positions 2157–2171 (DEKVESERTPLHSDE) are enriched in basic and acidic residues. Residues 2189 to 2215 (IEAESQNTNAEEEAEAQEEDEESMKMV) are a coiled coil. Positions 2198–2210 (AEEEAEAQEEDEE) are enriched in acidic residues.

The protein belongs to the SNF2/RAD54 helicase family.

It is found in the nucleus. In terms of biological role, chromatin-remodeling protein that binds DNA through histones and regulates gene transcription. May specifically recognize and bind trimethylated 'Lys-27' (H3K27me3) and non-methylated 'Lys-4' of histone H3. Probable chromatin remodeling factor. The polypeptide is Protein CHROMATIN REMODELING 4 (Arabidopsis thaliana (Mouse-ear cress)).